We begin with the raw amino-acid sequence, 287 residues long: Nucleotide-binding protein Ajs_0902 (287 aa).

An ATP-binding site is contributed by 10 to 17 (GMSGSGKS). A GTP-binding site is contributed by 59 to 62 (DVRS).

This sequence belongs to the RapZ-like family.

Functionally, displays ATPase and GTPase activities. In Acidovorax sp. (strain JS42), this protein is Nucleotide-binding protein Ajs_0902.